Here is a 407-residue protein sequence, read N- to C-terminus: Protein arginine N-methyltransferase 2 (407 aa).

In terms of domain architecture, RMT2 spans threonine 186–alanine 407. Residues tyrosine 193, methionine 223, phenylalanine 246–isoleucine 251, glutamate 267–histidine 269, tryptophan 294–glutamine 295, and aspartate 315 each bind S-adenosyl-L-methionine.

It belongs to the class I-like SAM-binding methyltransferase superfamily. RMT2 methyltransferase family. In terms of assembly, monomer.

It is found in the cytoplasm. The protein localises to the nucleus. Functionally, S-adenosyl-L-methionine-dependent protein-arginine N-methyltransferase that methylates the delta-nitrogen atom of arginine residues to form N5-methylarginine (type IV) in target proteins. Monomethylates ribosomal protein L12. In Kluyveromyces lactis (strain ATCC 8585 / CBS 2359 / DSM 70799 / NBRC 1267 / NRRL Y-1140 / WM37) (Yeast), this protein is Protein arginine N-methyltransferase 2.